A 58-amino-acid chain; its full sequence is Apelin receptor early endogenous ligand (58 aa).

Residues 1-22 form the signal peptide; the sequence is MRFFHPLYLLLLLLTVLVLISA.

Belongs to the Elabela/Toddler family. In terms of assembly, interacts with aplnra and aplnrb. In terms of tissue distribution, expressed ubiquitously during late blastula and gastrula stages and becomes restricted to the lateral mesoderm, endoderm, and anterior and posterior notochord after gastrulation.

The protein resides in the secreted. The protein localises to the extracellular space. Functionally, peptide hormone that functions as endogenous ligand for the G-protein-coupled apelin receptor (aplnra and/or aplnrb), that plays a role in the regulation of normal cardiovascular function and fluid homeostasis. Functions as a balanced agonist activating both G(i) protein pathway and beta-arrestin pathway of APLNR. Downstream G proteins activation, apelin can inhibit cAMP production and activate key intracellular effectors such as ERKs. On the other hand, APLNR activation induces beta-arrestin recruitment to the membrane leading to desensitization and internalization of the receptor. Required for mesendodermal differentiation, blood vessels formation and heart morphogenesis during early development and for adult cardiovascular homeostasis. Acts as a motogen by promoting mesendodermal cell migration during gastrulation by binding and activating the apelin receptor. Acts as an early embryonic regulator of cellular movement with a role in migration and development of cardiac progenitor cells. May act as a chemoattractant for the activation of angioblast migration toward the embryonic midline, i.e. the position of the future vessel formation, during vasculogenesis. Positively regulates sinus venosus (SV)-derived endothelial cells migration into the developing heart to promote coronary blood vessel sprouting. Involved in cardioprotective functions during heart failure. Mediates myocardial contractility in an ERK1/2-dependent manner. In Danio rerio (Zebrafish), this protein is Apelin receptor early endogenous ligand.